We begin with the raw amino-acid sequence, 437 residues long: Adenylosuccinate synthetase (437 aa).

Residues glycine 25 to lysine 31, glycine 53 to threonine 55, and lysine 62 each bind GTP. Aspartate 26 acts as the Proton acceptor in catalysis. Residues aspartate 26 and glycine 53 each coordinate Mg(2+). Residues aspartate 26 to lysine 29 and asparagine 51 to histidine 54 each bind IMP. Histidine 54 serves as the catalytic Proton donor. Threonine 141, arginine 155, asparagine 232, and threonine 247 together coordinate IMP. Threonine 307 provides a ligand contact to GTP. Residue threonine 307 to arginine 313 participates in substrate binding. Residue arginine 311 participates in IMP binding. GTP contacts are provided by residues arginine 313, lysine 339 to aspartate 341, and glycine 425 to glycine 427.

This sequence belongs to the adenylosuccinate synthetase family. In terms of assembly, homodimer. Mg(2+) serves as cofactor.

It is found in the cytoplasm. It carries out the reaction IMP + L-aspartate + GTP = N(6)-(1,2-dicarboxyethyl)-AMP + GDP + phosphate + 2 H(+). Its pathway is purine metabolism; AMP biosynthesis via de novo pathway; AMP from IMP: step 1/2. In terms of biological role, plays an important role in the salvage pathway for purine nucleotide biosynthesis. Catalyzes the first committed step in the biosynthesis of AMP from IMP. The polypeptide is Adenylosuccinate synthetase (Plasmodium knowlesi (strain H)).